The primary structure comprises 176 residues: Disulfide bond formation protein B (176 aa).

Over 1–14 (MLQFLNRCSRGRGA) the chain is Cytoplasmic. Residues 15–31 (WLLMALTAFLLELTALY) traverse the membrane as a helical segment. Over 32–49 (FQHIMLLQPCVMCIYERV) the chain is Periplasmic. A disulfide bond links cysteine 41 and cysteine 44. The helical transmembrane segment at 50–65 (ALFGILGASLLGAIAP) threads the bilayer. At 66-71 (RSPLRY) the chain is on the cytoplasmic side. A helical membrane pass occupies residues 72-89 (LAIAVWIYSAWKGVQLAW). The Periplasmic portion of the chain corresponds to 90–144 (AHTMLQLNPSPFNTCDFFVNFPSWLPLDKWLPAVFAASGDCSERQWQFMSLEMPQ). The cysteines at positions 104 and 130 are disulfide-linked. A helical transmembrane segment spans residues 145–163 (WLVGIFAAYLVIAVLVLIS). Residues 164–176 (QFVKPKRRDLFGR) are Cytoplasmic-facing.

It belongs to the DsbB family.

Its subcellular location is the cell inner membrane. Its function is as follows. Required for disulfide bond formation in some periplasmic proteins. Acts by oxidizing the DsbA protein. The chain is Disulfide bond formation protein B from Yersinia pestis bv. Antiqua (strain Nepal516).